The sequence spans 351 residues: Protein FAM118B (351 aa).

Ala2 bears the N-acetylalanine mark. Position 9 is a phosphoserine (Ser9).

This sequence belongs to the FAM118 family.

It localises to the nucleus. Its subcellular location is the cajal body. Its function is as follows. May play a role in Cajal bodies formation. This Bos taurus (Bovine) protein is Protein FAM118B (FAM118B).